An 883-amino-acid polypeptide reads, in one-letter code: Valine--tRNA ligase (883 aa).

Positions 52–62 (PNVTGRLHLGH) match the 'HIGH' region motif. The short motif at 529-533 (KMSKS) is the 'KMSKS' region element. Lys532 is a binding site for ATP. A coiled-coil region spans residues 813–848 (LEGLIDFDKEIKRLENELAKWTKEVERVQKKLSNQG).

Belongs to the class-I aminoacyl-tRNA synthetase family. ValS type 1 subfamily. As to quaternary structure, monomer.

The protein localises to the cytoplasm. It catalyses the reaction tRNA(Val) + L-valine + ATP = L-valyl-tRNA(Val) + AMP + diphosphate. In terms of biological role, catalyzes the attachment of valine to tRNA(Val). As ValRS can inadvertently accommodate and process structurally similar amino acids such as threonine, to avoid such errors, it has a 'posttransfer' editing activity that hydrolyzes mischarged Thr-tRNA(Val) in a tRNA-dependent manner. This is Valine--tRNA ligase from Oceanobacillus iheyensis (strain DSM 14371 / CIP 107618 / JCM 11309 / KCTC 3954 / HTE831).